A 125-amino-acid chain; its full sequence is Phosphoribosyl-AMP cyclohydrolase (125 aa).

Residue aspartate 74 coordinates Mg(2+). Cysteine 75 serves as a coordination point for Zn(2+). Mg(2+)-binding residues include aspartate 76 and aspartate 78. Residues cysteine 92 and cysteine 99 each contribute to the Zn(2+) site.

This sequence belongs to the PRA-CH family. In terms of assembly, homodimer. Mg(2+) is required as a cofactor. Requires Zn(2+) as cofactor.

The protein localises to the cytoplasm. It catalyses the reaction 1-(5-phospho-beta-D-ribosyl)-5'-AMP + H2O = 1-(5-phospho-beta-D-ribosyl)-5-[(5-phospho-beta-D-ribosylamino)methylideneamino]imidazole-4-carboxamide. The protein operates within amino-acid biosynthesis; L-histidine biosynthesis; L-histidine from 5-phospho-alpha-D-ribose 1-diphosphate: step 3/9. Its function is as follows. Catalyzes the hydrolysis of the adenine ring of phosphoribosyl-AMP. This chain is Phosphoribosyl-AMP cyclohydrolase, found in Geotalea uraniireducens (strain Rf4) (Geobacter uraniireducens).